The chain runs to 118 residues: uncharacterized protein (118 aa).

A signal peptide spans 1–27; that stretch reads MPIKEPDVWALIWSWLQTNLSSSSAQS.

This is an uncharacterized protein from Haemophilus influenzae (strain ATCC 51907 / DSM 11121 / KW20 / Rd).